A 547-amino-acid polypeptide reads, in one-letter code: Probable bifunctional tRNA threonylcarbamoyladenosine biosynthesis protein (547 aa).

The interval 1 to 329 is kae1; it reads MGNSNELICI…FRTDMVDVNW (329 aa). Residues His112, His116, and Tyr133 each coordinate Fe cation. L-threonylcarbamoyladenylate-binding positions include 133–137, Asp165, Gly178, Glu182, and Asn262; that span reads YVSGG. Residue Asp290 coordinates Fe cation. The region spanning 346–547 is the Protein kinase domain; the sequence is QIPRHLIGKG…KEVEKRGRYL (202 aa). ATP contacts are provided by residues 352–360 and Lys373; that span reads IGKGAEADI. The active-site Proton acceptor; for kinase activity is the Asp465.

The protein in the N-terminal section; belongs to the KAE1 / TsaD family. In the C-terminal section; belongs to the protein kinase superfamily. Tyr protein kinase family. BUD32 subfamily. As to quaternary structure, component of the KEOPS complex that consists of Kae1, Bud32, Cgi121 and Pcc1; the whole complex dimerizes. Fe(2+) serves as cofactor.

It localises to the cytoplasm. The enzyme catalyses L-seryl-[protein] + ATP = O-phospho-L-seryl-[protein] + ADP + H(+). It carries out the reaction L-threonyl-[protein] + ATP = O-phospho-L-threonyl-[protein] + ADP + H(+). The catalysed reaction is L-threonylcarbamoyladenylate + adenosine(37) in tRNA = N(6)-L-threonylcarbamoyladenosine(37) in tRNA + AMP + H(+). Its function is as follows. Required for the formation of a threonylcarbamoyl group on adenosine at position 37 (t(6)A37) in tRNAs that read codons beginning with adenine. Is a component of the KEOPS complex that is probably involved in the transfer of the threonylcarbamoyl moiety of threonylcarbamoyl-AMP (TC-AMP) to the N6 group of A37. The Kae1 domain likely plays a direct catalytic role in this reaction. The Bud32 domain probably displays kinase activity that regulates Kae1 function. This Methanococcus vannielii (strain ATCC 35089 / DSM 1224 / JCM 13029 / OCM 148 / SB) protein is Probable bifunctional tRNA threonylcarbamoyladenosine biosynthesis protein.